Reading from the N-terminus, the 357-residue chain is Dynein axonemal assembly factor 10 (357 aa).

WD repeat units follow at residues 80–127, 132–170, 184–223, and 277–321; these read EFTN…IPIW, AHQG…NSAN, EQTN…IQST, and EPNQ…IDKV.

As to quaternary structure, interacts with PIH1D1; the interaction associates DNAAF10 with the R2TP complex. Interacts with several dynein axonemal assembly factors.

It localises to the dynein axonemal particle. In terms of biological role, key assembly factor specifically required for the stability of axonemal dynein heavy chains in cytoplasm. This Dictyostelium discoideum (Social amoeba) protein is Dynein axonemal assembly factor 10 (dnaaf10).